We begin with the raw amino-acid sequence, 97 residues long: Protein S100-A10 (97 aa).

2 positions are modified to N6-acetyllysine: Lys-23 and Lys-28. At Lys-37 the chain carries N6-acetyllysine; alternate. Lys-37 is covalently cross-linked (Glycyl lysine isopeptide (Lys-Gly) (interchain with G-Cter in SUMO2); alternate). Residues Lys-54 and Lys-57 each carry the N6-acetyllysine modification. Positions 60–71 are ancestral calcium site; sequence DQCRDGKVGFQS.

The protein belongs to the S-100 family. As to quaternary structure, heterotetramer containing 2 light chains of S100A10/p11 and 2 heavy chains of ANXA2/p36. Interacts with SCN10A. Interacts with TASOR.

Functionally, because S100A10 induces the dimerization of ANXA2/p36, it may function as a regulator of protein phosphorylation in that the ANXA2 monomer is the preferred target (in vitro) of tyrosine-specific kinase. This Bos taurus (Bovine) protein is Protein S100-A10 (S100A10).